The sequence spans 421 residues: CinA-like protein (421 aa).

Belongs to the CinA family.

This chain is CinA-like protein, found in Myxococcus xanthus (strain DK1622).